The sequence spans 210 residues: Guanylate kinase (210 aa).

Residues 23 to 203 (GRVVVLSGPS…ACAELVSLLV (181 aa)) enclose the Guanylate kinase-like domain. An ATP-binding site is contributed by 30 to 37 (GPSAVGKS).

It belongs to the guanylate kinase family.

The protein resides in the cytoplasm. It catalyses the reaction GMP + ATP = GDP + ADP. In terms of biological role, essential for recycling GMP and indirectly, cGMP. In Mycobacterium leprae (strain TN), this protein is Guanylate kinase (gmk).